Consider the following 561-residue polypeptide: Arginine--tRNA ligase (561 aa).

The 'HIGH' region signature appears at 123 to 133; sequence PNIAKDMHVGH.

It belongs to the class-I aminoacyl-tRNA synthetase family. In terms of assembly, monomer.

The protein localises to the cytoplasm. The enzyme catalyses tRNA(Arg) + L-arginine + ATP = L-arginyl-tRNA(Arg) + AMP + diphosphate. The polypeptide is Arginine--tRNA ligase (argS) (Chlamydia pneumoniae (Chlamydophila pneumoniae)).